A 90-amino-acid chain; its full sequence is Guanine nucleotide-binding protein subunit gamma (90 aa).

Cys-86 carries the S-palmitoyl cysteine lipid modification. At Cys-87 the chain carries Cysteine methyl ester. Residue Cys-87 is the site of S-farnesyl cysteine attachment. A propeptide spans 88–90 (removed in mature form); the sequence is TIM.

This sequence belongs to the G protein gamma family. As to quaternary structure, g proteins are composed of 3 units, alpha, beta and gamma.

Its subcellular location is the membrane. The polypeptide is Guanine nucleotide-binding protein subunit gamma (Kluyveromyces lactis (strain ATCC 8585 / CBS 2359 / DSM 70799 / NBRC 1267 / NRRL Y-1140 / WM37) (Yeast)).